The sequence spans 381 residues: Creatine kinase M-type (381 aa).

The region spanning 11–98 (KLKFSAEEEF…FDPVIQDRHG (88 aa)) is the Phosphagen kinase N-terminal domain. The tract at residues 99-118 (GYKPTDKHRTDLNHENLKGG) is disordered. The Phosphagen kinase C-terminal domain maps to 125 to 367 (YVLSSRVRTG…KLMVEMEKKL (243 aa)). ATP-binding positions include 128 to 132 (SSRVR), His191, Arg236, Arg292, 320 to 325 (RGTGGV), and Asp335.

The protein belongs to the ATP:guanido phosphotransferase family. As to quaternary structure, dimer of identical or non-identical chains, which can be either B (brain type) or M (muscle type). With MM being the major form in skeletal muscle and myocardium, MB existing in myocardium, and BB existing in many tissues, especially brain. As to expression, predominantly found in skeletal muscle, but not in the heart.

Its subcellular location is the cytoplasm. The enzyme catalyses creatine + ATP = N-phosphocreatine + ADP + H(+). Functionally, reversibly catalyzes the transfer of phosphate between ATP and various phosphogens (e.g. creatine phosphate). Creatine kinase isoenzymes play a central role in energy transduction in tissues with large, fluctuating energy demands, such as skeletal muscle, heart, brain and spermatozoa. This Gallus gallus (Chicken) protein is Creatine kinase M-type.